Reading from the N-terminus, the 372-residue chain is Ligninase A (372 aa).

The signal sequence occupies residues 1 to 21 (MAFKQLVAAISLALSLTTANA). Residues 22 to 28 (AVVKEKR) constitute a propeptide that is removed on maturation. 4 disulfides stabilise this stretch: Cys31/Cys43, Cys42/Cys313, Cys62/Cys148, and Cys277/Cys345. His75 (proton acceptor) is an active-site residue. 4 residues coordinate Ca(2+): Asp76, Gly94, Asp96, and Ser98. His204 lines the heme b pocket. Ser205, Asp222, Thr224, Ile227, and Asp229 together coordinate Ca(2+). N-linked (GlcNAc...) asparagine glycosylation is present at Asn285.

This sequence belongs to the peroxidase family. Ligninase subfamily. Heme b serves as cofactor. Ca(2+) is required as a cofactor.

The catalysed reaction is 1-(3,4-dimethoxyphenyl)-2-(2-methoxyphenoxy)propane-1,3-diol + H2O2 = 3,4-dimethoxybenzaldehyde + guaiacol + glycolaldehyde + H2O. It carries out the reaction 2 (3,4-dimethoxyphenyl)methanol + H2O2 = 2 (3,4-dimethoxyphenyl)methanol radical + 2 H2O. It participates in secondary metabolite metabolism; lignin degradation. Its function is as follows. Depolymerization of lignin. Catalyzes the C(alpha)-C(beta) cleavage of the propyl side chains of lignin. This Phanerodontia chrysosporium (White-rot fungus) protein is Ligninase A (LIPA).